The following is a 77-amino-acid chain: U8-lycotoxin-Ls1n (77 aa).

The N-terminal stretch at 1–20 is a signal peptide; it reads MKLMIFTGLVLFAIVSLIEA. A propeptide spanning residues 21–26 is cleaved from the precursor; the sequence is QAENEK.

It belongs to the neurotoxin 19 (CSTX) family. 08 (U8-Lctx) subfamily. Post-translationally, contains 4 disulfide bonds. As to expression, expressed by the venom gland.

Its subcellular location is the secreted. The protein is U8-lycotoxin-Ls1n of Lycosa singoriensis (Wolf spider).